The following is a 162-amino-acid chain: uncharacterized protein (162 aa).

The protein to R.meliloti R02472.

This is an uncharacterized protein from Escherichia coli (strain K12).